Consider the following 581-residue polypeptide: Frizzled-10 (581 aa).

The signal sequence occupies residues 1–20 (MQRPGPRLWLVLQVMGSCAA). Residues 21-225 (ISSMDMERPG…DVYWSREDKR (205 aa)) lie on the Extracellular side of the membrane. The FZ domain occupies 29–150 (PGDGKCQPIE…NDPNYLCMEA (122 aa)). 5 cysteine pairs are disulfide-bonded: Cys34–Cys95, Cys42–Cys88, Cys79–Cys117, Cys106–Cys147, and Cys110–Cys134. N-linked (GlcNAc...) asparagine glycosylation is present at Asn48. Residue Asn153 is glycosylated (N-linked (GlcNAc...) asparagine). Residues 226-246 (FAVVWLAIWAVLCFFSSAFTV) traverse the membrane as a helical segment. Topologically, residues 247–262 (LTFLIDPARFRYPERP) are cytoplasmic. Residues 263–283 (IIFLSMCYCVYSVGYLIRLFA) traverse the membrane as a helical segment. Residues 284-311 (GAESIACDRDSGQLYVIQEGLESTGCTL) lie on the Extracellular side of the membrane. Residues 312-332 (VFLVLYYFGMASSLWWVVLTL) traverse the membrane as a helical segment. Residues 333 to 351 (TWFLAAGKKWGHEAIEANS) lie on the Cytoplasmic side of the membrane. The chain crosses the membrane as a helical span at residues 352–372 (SYFHLAAWAIPAVKTILILVM). Over 373 to 393 (RRVAGDELTGVCYVGSMDVNA) the chain is Extracellular. A helical membrane pass occupies residues 394–414 (LTGFVLIPLACYLVIGTSFIL). Residues 415-443 (SGFVALFHIRRVMKTGGENTDKLEKLMVR) are Cytoplasmic-facing. The helical transmembrane segment at 444-464 (IGLFSVLYTVPATCVIACYFY) threads the bilayer. The Extracellular segment spans residues 465-502 (ERLNMDYWKILAAQHKCKMNNQTKTLDCLMAASIPAVE). An N-linked (GlcNAc...) asparagine glycan is attached at Asn485. Residues 503-523 (IFMVKIFMLLVVGITSGMWIW) traverse the membrane as a helical segment. The Cytoplasmic portion of the chain corresponds to 524-581 (TSKTLQSWQQVCSRRLKKKSRRKPASVITSGGIYKKAQHPQKTHHGKYEIPAQSPTCV). The Lys-Thr-X-X-X-Trp motif, mediates interaction with the PDZ domain of Dvl family members signature appears at 526-531 (KTLQSW). Residues 560 to 581 (AQHPQKTHHGKYEIPAQSPTCV) are disordered. Residues 579–581 (TCV) carry the PDZ-binding motif.

This sequence belongs to the G-protein coupled receptor Fz/Smo family. In terms of assembly, interacts with WNT7B. Interacts with MYOC. Ubiquitinated by ZNRF3, leading to its degradation by the proteasome. Highest levels in the placenta and fetal kidney, followed by fetal lung and brain. In adult brain, abundantly expressed in the cerebellum, followed by cerebral cortex, medulla and spinal cord; very low levels in total brain, frontal lobe, temporal lobe and putamen. Weak expression detected in adult brain, heart, lung, skeletal muscle, pancreas, spleen and prostate.

Its subcellular location is the cell membrane. In terms of biological role, receptor for Wnt proteins. Functions in the canonical Wnt/beta-catenin signaling pathway. The canonical Wnt/beta-catenin signaling pathway leads to the activation of disheveled proteins, inhibition of GSK-3 kinase, nuclear accumulation of beta-catenin and activation of Wnt target genes. A second signaling pathway involving PKC and calcium fluxes has been seen for some family members, but it is not yet clear if it represents a distinct pathway or if it can be integrated in the canonical pathway, as PKC seems to be required for Wnt-mediated inactivation of GSK-3 kinase. Both pathways seem to involve interactions with G-proteins. May be involved in transduction and intercellular transmission of polarity information during tissue morphogenesis and/or in differentiated tissues. This chain is Frizzled-10 (FZD10), found in Homo sapiens (Human).